We begin with the raw amino-acid sequence, 343 residues long: Anthranilate phosphoribosyltransferase (343 aa).

Residues Gly-86, 89–90 (GD), Thr-94, 96–99 (NIST), 114–122 (KHGNRSASG), and Ser-126 contribute to the 5-phospho-alpha-D-ribose 1-diphosphate site. Position 86 (Gly-86) interacts with anthranilate. Ser-98 lines the Mg(2+) pocket. Position 117 (Asn-117) interacts with anthranilate. Anthranilate is bound at residue Arg-172. Mg(2+) is bound by residues Asp-231 and Glu-232.

It belongs to the anthranilate phosphoribosyltransferase family. In terms of assembly, homodimer. The cofactor is Mg(2+).

The enzyme catalyses N-(5-phospho-beta-D-ribosyl)anthranilate + diphosphate = 5-phospho-alpha-D-ribose 1-diphosphate + anthranilate. Its pathway is amino-acid biosynthesis; L-tryptophan biosynthesis; L-tryptophan from chorismate: step 2/5. Functionally, catalyzes the transfer of the phosphoribosyl group of 5-phosphorylribose-1-pyrophosphate (PRPP) to anthranilate to yield N-(5'-phosphoribosyl)-anthranilate (PRA). The chain is Anthranilate phosphoribosyltransferase from Synechococcus sp. (strain JA-3-3Ab) (Cyanobacteria bacterium Yellowstone A-Prime).